We begin with the raw amino-acid sequence, 461 residues long: Putative 2,3-dihydroxypropane-1-sulfonate exporter (461 aa).

At 1-20 (MSHITTEDPATLRLPFKEKL) the chain is on the cytoplasmic side. A helical transmembrane segment spans residues 21–41 (SYGIGDLASNILLDIGTLYLL). Residues 42–47 (KFYTDV) are Periplasmic-facing. The helical transmembrane segment at 48-68 (LGLPGTYGGIIFLISKFFTAF) threads the bilayer. The Cytoplasmic segment spans residues 69–92 (TDMGTGIMLDSRRKIGPKGKFRPF). The helical transmembrane segment at 93–113 (ILYASFPVTLLAIANFVGTPF) threads the bilayer. The Periplasmic segment spans residues 114–123 (DVTGKTVMAT). Residues 124–144 (ILFMLYGLFFSMMNCSYGAMV) traverse the membrane as a helical segment. Residues 145–162 (PAITKNPNERASLAAWRQ) lie on the Cytoplasmic side of the membrane. Residues 163–183 (GGATLGLLLCTVGFVPVMNLI) form a helical membrane-spanning segment. At 184–188 (EGNQQ) the chain is on the periplasmic side. A helical transmembrane segment spans residues 189–209 (LGYIFAATLFSLFGLLFMWIC). Residues 210-243 (YSGVKERYVETQPANPAQKPGLLQSFRAIAGNRP) lie on the Cytoplasmic side of the membrane. Residues 244 to 264 (LFILCIANLCTLGAFNVKLAI) form a helical membrane-spanning segment. The Periplasmic segment spans residues 265-276 (QVYYTQYVLNDP). A helical transmembrane segment spans residues 277–297 (ILLSYMGFFSMGCIFIGVFLM). The Cytoplasmic portion of the chain corresponds to 298 to 308 (PASVRRFGKKK). Residues 309–329 (VYIGGLLIWVLGDLLNYFFGG) traverse the membrane as a helical segment. A topological domain (periplasmic) is located at residue Gly330. A helical transmembrane segment spans residues 331–351 (SVSFVAFSCLAFFGSAFVNSL). Residues 352 to 387 (NWALVSDTVEYGEWRTGVRSEGTVYTGFTFFRKVSQ) lie on the Cytoplasmic side of the membrane. Residues 388–408 (ALAGFFPGWMLTQIGYVPNVA) traverse the membrane as a helical segment. At 409-419 (QADHTIEGLRQ) the chain is on the periplasmic side. A helical membrane pass occupies residues 420–440 (LIFIYPSALAVVTIVAMGCFY). The Cytoplasmic portion of the chain corresponds to 441 to 461 (SLNEKMYVRIVEEIEARKRTA).

The protein belongs to the sodium:galactoside symporter (TC 2.A.2) family.

Its subcellular location is the cell inner membrane. In terms of biological role, could be involved in the export of 2,3-dihydroxypropane-1-sulfonate (DHPS). This Escherichia coli (strain K12) protein is Putative 2,3-dihydroxypropane-1-sulfonate exporter (yihP).